A 481-amino-acid chain; its full sequence is (S)-N-methylcoclaurine 3'-hydroxylase isozyme 1 (481 aa).

C423 is a binding site for heme.

This sequence belongs to the cytochrome P450 family. Heme serves as cofactor. In terms of tissue distribution, restricted to the parietal region of sieve elements adjacent or proximal to laticifers in roots, stems, leaves, carpels and hypocotyls.

The protein resides in the endoplasmic reticulum. It catalyses the reaction (S)-N-methylcoclaurine + reduced [NADPH--hemoprotein reductase] + O2 = (S)-3'-hydroxy-N-methylcoclaurine + oxidized [NADPH--hemoprotein reductase] + H2O + H(+). The protein operates within alkaloid biosynthesis; (S)-reticuline biosynthesis; (S)-reticuline from (S)-norcoclaurine: step 3/4. Cytochrome P450 monooxygenase involved in the biosynthesis of benzylisoquinoline alkaloids. Catalyzes the 3'-hydroxylation of (S)-N-methylcoclaurine. The protein is (S)-N-methylcoclaurine 3'-hydroxylase isozyme 1 of Papaver somniferum (Opium poppy).